The primary structure comprises 263 residues: Ycf3-interacting protein 1, chloroplastic (263 aa).

A chloroplast-targeting transit peptide spans 1-71 (MASNMLQLSL…VNKEEDSATY (71 aa)). The chain crosses the membrane as a helical span at residues 238 to 258 (ALYLVSAFPIIIGISVVLILF).

This sequence belongs to the Y3IP1/CEST family. In terms of assembly, interacts with Ycf3.

Its subcellular location is the plastid. It is found in the chloroplast thylakoid membrane. In terms of biological role, nuclear genome-encoded factor that participates in photosystem I (PSI) biogenesis. Cooperates with the plastid genome-encoded protein PSI assembly Ycf3 in the assembly of stable PSI units in the thylakoid membrane. The polypeptide is Ycf3-interacting protein 1, chloroplastic (Nicotiana tabacum (Common tobacco)).